We begin with the raw amino-acid sequence, 229 residues long: Urease accessory protein UreF (229 aa).

The protein belongs to the UreF family. As to quaternary structure, ureD, UreF and UreG form a complex that acts as a GTP-hydrolysis-dependent molecular chaperone, activating the urease apoprotein by helping to assemble the nickel containing metallocenter of UreC. The UreE protein probably delivers the nickel.

The protein resides in the cytoplasm. Required for maturation of urease via the functional incorporation of the urease nickel metallocenter. The chain is Urease accessory protein UreF from Staphylococcus saprophyticus subsp. saprophyticus (strain ATCC 15305 / DSM 20229 / NCIMB 8711 / NCTC 7292 / S-41).